Consider the following 837-residue polypeptide: Thioredoxin domain-containing protein 3 homolog (837 aa).

In terms of domain architecture, Thioredoxin spans 6–115 (EQIQLQKEIL…LKNVERELKQ (110 aa)). Cys39 and Cys42 are joined by a disulfide. 3 NDK regions span residues 201–345 (KEVT…SVPI), 355–491 (IEKT…FPKQ), and 493–629 (TLAV…EVLP). Residues 633 to 837 (VKDSVASISM…EEKTEEQTAS (205 aa)) are disordered. Over residues 638–647 (ASISMEQSQV) the composition is skewed to polar residues. The segment covering 652 to 670 (EEGGEEQTEQPAGEGEEQQ) has biased composition (acidic residues). Composition is skewed to low complexity over residues 671–707 (AEQP…PPAE), 718–752 (QQTQ…AEQT), and 766–787 (APAT…QQTQ). Gly residues predominate over residues 805–819 (AGGGEEAVATEGGGE). Basic and acidic residues predominate over residues 820–837 (GDAKPEGGEEKTEEQTAS).

The protein in the C-terminal section; belongs to the NDK family. As to quaternary structure, monomer. In terms of tissue distribution, testis-specific. In sperm, it is a component of the arm dynein of sperm axoneme.

Its function is as follows. Probably required during the final stages of sperm tail maturation in the testis and/or epididymis, where extensive disulfide bonding of fibrous sheath (FS) proteins occurs. In vitro, it has neither nucleoside diphosphate kinase (NDPK) activity nor reducing activity on disulfide bonds. Exhibits a 3'-5' exonuclease activity with a preference for single-stranded DNA, suggesting roles in DNA proofreading and repair. In Heliocidaris crassispina (Sea urchin), this protein is Thioredoxin domain-containing protein 3 homolog (NME8).